The following is a 3655-amino-acid chain: NuA4 acetyltransferase complex subunit Tra2 (3655 aa).

The HEAT stretch occupies residues 8-2459 (SLSSSIELLK…REYHIRLLGK (2452 aa)). HEAT repeat units lie at residues 46-89 (QLYA…CAHR), 94-131 (QYAQSCVLSFISLIKADNEEVAVFCLKVIMDIFKTFKF), 149-188 (TNLPYLIPSIFVENPKSNEEENTTLAFGSYLSTETSIIQQ), 230-268 (PGVQAIIPCFLKMVQIDVPIDIASYAMIEKDSSIDFIEF), 300-338 (LSEKDIIPDIVIKLLRRCPFDMCFARKELLVATRHILST), 374-412 (STLADLLHHVRDELNETQIRKSIMIYSTNMHDLTLSIGL), 438-475 (FLLLSIFDSFVNKFSELNDSLDQFFKKKYEEEIKETKS), 606-643 (IFLKVFETNLPTFFDQLKKNLTLFHIPQFLLSNESTSS), 644-683 (KFLNILLRFLLSRIEELGSSDIRHGSVLLRLFRLSFVTVS), 735-772 (SLYKEVMPLLHALLEAFNSLLISARTPKEKDLFTELCL), 783-820 (PYMSYLMRPLVMSLKSSQELVSQGLRTFELCLDNLTPD), 828-867 (PYIEDLMNALWSHLQPLPYNYNHSHTALKILGKLGGRNRK), 1100-1141 (AFIL…QDHS), 1147-1184 (DRQVDILTALFFTLKDTTSEVPTVCKDHVMDVLKQLFR), 1193-1230 (EIAPGILGHLVLELSNHNSVVRSSTQKLLSLLSELSNT), 1429-1470 (RKLL…LFHL), 1665-1704 (NLVSDLTAHLVKKIEEPDLENNVKLILNLILSKDYGFLLK), 1709-1746 (GILLTYLNQNVSSLEKCNQIFSIFYEVFFQHPSTNVYA), 1753-1790 (IGALQIISFFLKNVPEITVQHQTEMLKMCSLFGNSEDV), 1808-1846 (QFPYELVNVVYMALLKSSPIEVRHLVKSSFDNIFSYIFS), 1891-1934 (EHRG…WNDL), 1973-2011 (SEAISLLERLLSSGTWASLGMKLSFFTKSITHFDATDAN), 2036-2073 (ENLSDLKFLLEKSLENESVGVQSAIGNFVSTILTLSNT), 2120-2157 (DALHTLLPGFMRCFHKVAKEFLSLGSQPSGNSLNLQIV), 2183-2221 (DQRRWFLSALVQIIEKSSSYEICNYLLEIVRGWIMNSPV), and 2401-2438 (DFVLPVLSLQFSNSKIAEYLWRDFFNASVCSFTKDEIP). Positions 2460-3655 (TPNVLETILT…QMDQLWQAWL (1196 aa)) are head. One can recognise an FAT domain in the interval 2484-3045 (LLVYLSKTYG…HFQLRTAYED (562 aa)). A disordered region spans residues 3059-3105 (RGNSRLRENDSSSDNKSKDLSPSGSFSSVSQFNSKNGSPSSIDSSEK). A compositionally biased stretch (basic and acidic residues) spans 3063-3077 (RLRENDSSSDNKSKD). The span at 3078 to 3092 (LSPSGSFSSVSQFNS) shows a compositional bias: low complexity. Residues 3285 to 3625 (VPNVDLVRGH…VISHNVPEDL (341 aa)) form the PI3K/PI4K catalytic domain. Positions 3291–3297 (VRGHTMC) are G-loop. A catalytic loop region spans residues 3491 to 3499 (NIGGRSPQK). The activation loop stretch occupies residues 3511 to 3536 (SQDLLPSMTSNQPVFHNTEAVPFRLT). In terms of domain architecture, FATC spans 3623–3655 (EDLPLNQTLVDLVSQATNPQQLAQMDQLWQAWL).

The protein belongs to the PI3/PI4-kinase family. TRA1 subfamily. In terms of assembly, component of the NuA4 acetyltransferase complex. Tra1 is the scaffold subunit for binding to a variety of transcription activators or transcription factors to recruit NuA4 for targeted gene activation. Requires Hsp90 and its co-chaperone, the Triple-T complex (TTT), for its incorporation into NuA4. Interacts with tel2.

Component of the NuA4 histone H4/H2A acetyltransferase involved in transcription and DNA repair. This chain is NuA4 acetyltransferase complex subunit Tra2, found in Schizosaccharomyces pombe (strain 972 / ATCC 24843) (Fission yeast).